We begin with the raw amino-acid sequence, 338 residues long: Glycerol-3-phosphate dehydrogenase [NAD(P)+] (338 aa).

Residues S11, W12, H32, H33, and K109 each coordinate NADPH. Residues K109, G140, and S142 each coordinate sn-glycerol 3-phosphate. A144 serves as a coordination point for NADPH. Sn-glycerol 3-phosphate-binding residues include K195, D248, S258, R259, and N260. The active-site Proton acceptor is K195. Position 259 (R259) interacts with NADPH. NADPH contacts are provided by V283 and E285.

This sequence belongs to the NAD-dependent glycerol-3-phosphate dehydrogenase family.

Its subcellular location is the cytoplasm. It carries out the reaction sn-glycerol 3-phosphate + NAD(+) = dihydroxyacetone phosphate + NADH + H(+). The enzyme catalyses sn-glycerol 3-phosphate + NADP(+) = dihydroxyacetone phosphate + NADPH + H(+). Its pathway is membrane lipid metabolism; glycerophospholipid metabolism. Its function is as follows. Catalyzes the reduction of the glycolytic intermediate dihydroxyacetone phosphate (DHAP) to sn-glycerol 3-phosphate (G3P), the key precursor for phospholipid synthesis. The chain is Glycerol-3-phosphate dehydrogenase [NAD(P)+] from Leuconostoc citreum (strain KM20).